A 459-amino-acid polypeptide reads, in one-letter code: Ribulose bisphosphate carboxylase large chain (459 aa).

K4 carries the N6,N6,N6-trimethyllysine modification. Residues N113 and T163 each contribute to the substrate site. The active-site Proton acceptor is K165. Substrate is bound at residue K167. Mg(2+) is bound by residues K191, D193, and E194. An N6-carboxylysine modification is found at K191. H284 serves as the catalytic Proton acceptor. The substrate site is built by R285, H317, and S369.

The protein belongs to the RuBisCO large chain family. Type I subfamily. As to quaternary structure, heterohexadecamer of 8 large chains and 8 small chains; disulfide-linked. The disulfide link is formed within the large subunit homodimers. Requires Mg(2+) as cofactor. Post-translationally, the disulfide bond which can form in the large chain dimeric partners within the hexadecamer appears to be associated with oxidative stress and protein turnover.

It is found in the plastid. The protein localises to the chloroplast. The catalysed reaction is 2 (2R)-3-phosphoglycerate + 2 H(+) = D-ribulose 1,5-bisphosphate + CO2 + H2O. It carries out the reaction D-ribulose 1,5-bisphosphate + O2 = 2-phosphoglycolate + (2R)-3-phosphoglycerate + 2 H(+). In terms of biological role, ruBisCO catalyzes two reactions: the carboxylation of D-ribulose 1,5-bisphosphate, the primary event in carbon dioxide fixation, as well as the oxidative fragmentation of the pentose substrate in the photorespiration process. Both reactions occur simultaneously and in competition at the same active site. This is Ribulose bisphosphate carboxylase large chain from Roridula gorgonias (South African fly bush).